The primary structure comprises 261 residues: Ribosomal RNA small subunit methyltransferase A (261 aa).

S-adenosyl-L-methionine contacts are provided by asparagine 15, isoleucine 17, glycine 42, glutamate 64, aspartate 90, and asparagine 109.

This sequence belongs to the class I-like SAM-binding methyltransferase superfamily. rRNA adenine N(6)-methyltransferase family. RsmA subfamily.

The protein localises to the cytoplasm. It carries out the reaction adenosine(1518)/adenosine(1519) in 16S rRNA + 4 S-adenosyl-L-methionine = N(6)-dimethyladenosine(1518)/N(6)-dimethyladenosine(1519) in 16S rRNA + 4 S-adenosyl-L-homocysteine + 4 H(+). Functionally, specifically dimethylates two adjacent adenosines (A1518 and A1519) in the loop of a conserved hairpin near the 3'-end of 16S rRNA in the 30S particle. May play a critical role in biogenesis of 30S subunits. This Wolbachia sp. subsp. Brugia malayi (strain TRS) protein is Ribosomal RNA small subunit methyltransferase A.